The primary structure comprises 870 residues: H(+)/Cl(-) exchange transporter 6 (870 aa).

The Cytoplasmic portion of the chain corresponds to 1–80 (MAGCRGSVCC…KKGRRYEAVK (80 aa)). A run of 2 helical transmembrane segments spans residues 81-113 (WMVV…FGVV) and 128-150 (LSLL…LVLI). Positions 156-160 (GSGIP) match the Selectivity filter part_1 motif. Serine 157 is a chloride binding site. The segment at residues 159–166 (IPEIKCYL) is an intramembrane region (helical). Helical transmembrane passes span 176–194 (RLRT…VSGG) and 200–217 (EGPM…LPQF). The short motif at 198 to 202 (GKEGP) is the Selectivity filter part_2 element. 2 intramembrane regions (helical) span residues 241 to 253 (FVSA…VAAA) and 257 to 265 (PIGGTLFSL). 3 consecutive transmembrane segments (helical) span residues 277-294 (TWKV…LNFF), 335-364 (GFFV…YRMR), and 371-392 (KLVR…VFVA). 3 N-linked (GlcNAc...) asparagine glycosylation sites follow: asparagine 410, asparagine 423, and asparagine 433. The next 2 membrane-spanning stretches (helical) occupy residues 463–482 (PVTL…WTFG) and 488–512 (GLFV…KSYI). Residues 488–492 (GLFVP) carry the Selectivity filter part_3 motif. Phenylalanine 490 contributes to the chloride binding site. The helical intramembrane region spans 520 to 534 (GTFALIGAAAFLGGV). Residues 535–537 (VRM) constitute an intramembrane region (note=Loop between two helices). Positions 538 to 549 (TISLTVILIEST) form an intramembrane region, helical. The segment at residues 550-553 (NEIT) is an intramembrane region (note=Loop between two helices). A helical transmembrane segment spans residues 554–572 (YGLPIMVTLMVAKWTGDLF). Residues 573–870 (NKGIYDVHIG…ARLRQHYQTL (298 aa)) lie on the Cytoplasmic side of the membrane. Tyrosine 577 is a chloride binding site. Positions 606-663 (MEPNLTYVYPHTRIQSLVSILRTTVHHAFPVVTENRGNEKEFMKGNQLISNNIKFKKS) constitute a CBS 1 domain. An ATP-binding site is contributed by 631–633 (HHA). A Phosphoserine modification is found at serine 774. One can recognise a CBS 2 domain in the interval 808–869 (MNPSPFTVSP…QARLRQHYQT (62 aa)). 850 to 853 (TRHN) is a binding site for ATP.

This sequence belongs to the chloride channel (TC 2.A.49) family. ClC-6/CLCN6 subfamily. N-glycosylated on several asparagine residues. Detected in whole brain and in hippocampus neurons (at protein level). Detected in brain, trigeminus, dorsal root ganglion, spinal cord, eye, kidney, testis, skeletal muscle, thymus and pancreas. Isoform ClC-6c is expressed only in kidney.

Its subcellular location is the late endosome membrane. The enzyme catalyses 2 chloride(in) + H(+)(out) = 2 chloride(out) + H(+)(in). Its function is as follows. Voltage-gated channel mediating the exchange of chloride ions against protons. Functions as antiporter and contributes to the acidification of the late endosome lumen. The CLC channel family contains both chloride channels and proton-coupled anion transporters that exchange chloride or another anion for protons. The presence of conserved gating glutamate residues is typical for family members that function as antiporters. This chain is H(+)/Cl(-) exchange transporter 6, found in Mus musculus (Mouse).